Consider the following 430-residue polypeptide: Citrate synthase (430 aa).

Catalysis depends on residues His-305 and Asp-363.

It belongs to the citrate synthase family. As to quaternary structure, homohexamer.

The catalysed reaction is oxaloacetate + acetyl-CoA + H2O = citrate + CoA + H(+). The protein operates within carbohydrate metabolism; tricarboxylic acid cycle; isocitrate from oxaloacetate: step 1/2. Its activity is regulated as follows. Allosterically inhibited by NADH. This Coxiella burnetii (strain RSA 493 / Nine Mile phase I) protein is Citrate synthase (gltA).